A 275-amino-acid polypeptide reads, in one-letter code: Ribosomal RNA small subunit methyltransferase A (275 aa).

The S-adenosyl-L-methionine site is built by N27, L29, G54, E76, D102, and N123.

The protein belongs to the class I-like SAM-binding methyltransferase superfamily. rRNA adenine N(6)-methyltransferase family. RsmA subfamily.

The protein resides in the cytoplasm. The enzyme catalyses adenosine(1518)/adenosine(1519) in 16S rRNA + 4 S-adenosyl-L-methionine = N(6)-dimethyladenosine(1518)/N(6)-dimethyladenosine(1519) in 16S rRNA + 4 S-adenosyl-L-homocysteine + 4 H(+). Specifically dimethylates two adjacent adenosines (A1518 and A1519) in the loop of a conserved hairpin near the 3'-end of 16S rRNA in the 30S particle. May play a critical role in biogenesis of 30S subunits. The sequence is that of Ribosomal RNA small subunit methyltransferase A from Chelativorans sp. (strain BNC1).